We begin with the raw amino-acid sequence, 265 residues long: Probable ribose-5-phosphate isomerase 2 (265 aa).

Position 2 is an N-acetylalanine (alanine 2). Serine 96 carries the post-translational modification Phosphoserine.

This sequence belongs to the ribose 5-phosphate isomerase family.

Its subcellular location is the cytoplasm. The enzyme catalyses aldehydo-D-ribose 5-phosphate = D-ribulose 5-phosphate. Its pathway is carbohydrate degradation; pentose phosphate pathway; D-ribose 5-phosphate from D-ribulose 5-phosphate (non-oxidative stage): step 1/1. Functionally, catalyzes the reversible conversion of ribose-5-phosphate to ribulose 5-phosphate. The protein is Probable ribose-5-phosphate isomerase 2 (RPI2) of Arabidopsis thaliana (Mouse-ear cress).